The following is a 289-amino-acid chain: 4-diphosphocytidyl-2-C-methyl-D-erythritol kinase (289 aa).

The active site involves lysine 11. 95–105 serves as a coordination point for ATP; it reads PMGGGIGGGSS. Residue aspartate 137 is part of the active site.

This sequence belongs to the GHMP kinase family. IspE subfamily.

It catalyses the reaction 4-CDP-2-C-methyl-D-erythritol + ATP = 4-CDP-2-C-methyl-D-erythritol 2-phosphate + ADP + H(+). The protein operates within isoprenoid biosynthesis; isopentenyl diphosphate biosynthesis via DXP pathway; isopentenyl diphosphate from 1-deoxy-D-xylulose 5-phosphate: step 3/6. In terms of biological role, catalyzes the phosphorylation of the position 2 hydroxy group of 4-diphosphocytidyl-2C-methyl-D-erythritol. The protein is 4-diphosphocytidyl-2-C-methyl-D-erythritol kinase of Aeromonas salmonicida (strain A449).